An 86-amino-acid chain; its full sequence is Neurotoxin LmNaTx17 (86 aa).

An N-terminal signal peptide occupies residues 1-18 (MKILFVIVLAAFFIGVHC). The LCN-type CS-alpha/beta domain maps to 19 to 85 (KHGYPVQYSG…TWDYKTGKCR (67 aa)). 4 disulfides stabilise this stretch: cysteine 33-cysteine 84, cysteine 37-cysteine 58, cysteine 44-cysteine 65, and cysteine 48-cysteine 67.

The protein belongs to the long (4 C-C) scorpion toxin superfamily. Sodium channel inhibitor family. Beta subfamily. In terms of tissue distribution, expressed by the venom gland.

Its subcellular location is the secreted. Binds voltage-independently at site-4 of sodium channels (Nav) and shift the voltage of activation toward more negative potentials thereby affecting sodium channel activation and promoting spontaneous and repetitive firing. In Lychas mucronatus (Chinese swimming scorpion), this protein is Neurotoxin LmNaTx17.